A 196-amino-acid polypeptide reads, in one-letter code: MDNHAAVREFDEERATAAIRELLIAVGEDPDREGLLETPARVARAYKETFAGLHEDPTTVLEKTFSEGHEELVLVREIPIYSMCEHHLVPFFGVAHIGYIPGKSGKVTGLSKLARLADMFAKRPQVQERLTSQIADALVEKLDAQAVAVVIEAEHLCMAMRGIRKPGAVTTTSAVRGGFKNNAASRAEVFSLIRGH.

Zn(2+)-binding residues include C84, H87, and C157.

Belongs to the GTP cyclohydrolase I family. In terms of assembly, toroid-shaped homodecamer, composed of two pentamers of five dimers.

It catalyses the reaction GTP + H2O = 7,8-dihydroneopterin 3'-triphosphate + formate + H(+). It functions in the pathway cofactor biosynthesis; 7,8-dihydroneopterin triphosphate biosynthesis; 7,8-dihydroneopterin triphosphate from GTP: step 1/1. The sequence is that of GTP cyclohydrolase 1 from Corynebacterium glutamicum (strain ATCC 13032 / DSM 20300 / JCM 1318 / BCRC 11384 / CCUG 27702 / LMG 3730 / NBRC 12168 / NCIMB 10025 / NRRL B-2784 / 534).